The following is a 104-amino-acid chain: MSKKIKLNDEIIVRVGKYKGKTGKIKKIFSDGKAIIEGINISKKHKKPTPNEKQSGGIFEKEQPISLSNVAIFNIDTNKPDKVKFKIEKGKKYRIFKSNGKKIK.

The disordered stretch occupies residues 41–61; it reads ISKKHKKPTPNEKQSGGIFEK.

Belongs to the universal ribosomal protein uL24 family. In terms of assembly, part of the 50S ribosomal subunit.

Its function is as follows. One of two assembly initiator proteins, it binds directly to the 5'-end of the 23S rRNA, where it nucleates assembly of the 50S subunit. One of the proteins that surrounds the polypeptide exit tunnel on the outside of the subunit. This Wigglesworthia glossinidia brevipalpis protein is Large ribosomal subunit protein uL24.